Consider the following 312-residue polypeptide: MKWSEISIHTTHEAVEAISNILHEAGAGGVVIEDPFELTKERETTYGEIYQLNPDDYPEEGVIIKAYLPVNSFLGETVEEIKQAINNLMLYNIDIGRNKITISEVNEEEWATAWKKYYNPVKISERFTIVPTWETYEPVSSDELIIELDPGMAFGTGTHPTTVMCIQALEKTVKKGDTVVDVGTGSGILSIAAAMLGAKRVHALDLDPVAVESAKLNVKLNKVHDVVTVSQNNLLDRMDEQADVIVANILAEIILRFVDDAYRLLRSDGVFITSGIIQTKKQEVKEGLLRAGFTIEETLTMEDWVAFIAKKQ.

4 residues coordinate S-adenosyl-L-methionine: threonine 162, glycine 183, aspartate 205, and asparagine 248.

The protein belongs to the methyltransferase superfamily. PrmA family.

The protein resides in the cytoplasm. It carries out the reaction L-lysyl-[protein] + 3 S-adenosyl-L-methionine = N(6),N(6),N(6)-trimethyl-L-lysyl-[protein] + 3 S-adenosyl-L-homocysteine + 3 H(+). Functionally, methylates ribosomal protein L11. This Anoxybacillus flavithermus (strain DSM 21510 / WK1) protein is Ribosomal protein L11 methyltransferase.